The primary structure comprises 1016 residues: Nonsense-mediated mRNA decay factor SMG5 (1016 aa).

An N-acetylserine modification is found at serine 2. Phosphoserine is present on residues serine 2 and serine 423. Disordered regions lie at residues 408-561 and 594-637; these read NPVP…PSEA and PTTN…RSCR. Basic residues predominate over residues 449-466; it reads KSRKFSRLSCLRRRRHPP. The span at 594 to 603 shows a compositional bias: polar residues; it reads PTTNPHTSAS. A compositionally biased stretch (acidic residues) spans 619 to 628; sequence ASEEGSESEG. Residues 798-841 are a coiled coil; the sequence is QSEQESLLQQAQAQFRMAQEEARRNRLMRDMAQLRLQLEVSQLE. Residues 872 to 995 form the PINc domain; the sequence is RQLATSGRFI…GPMQAALQAA (124 aa).

Interacts with TERT, PPP2CA and SMG1. Part of a complex that contains SMG1, SMG5, SMG7, PPP2CA, a short isoform of UPF3A (isoform UPF3AS, but not isoform UPF3AL) and phosphorylated UPF1. Not detected in complexes that contain unphosphorylated UPF1. Ubiquitous.

It localises to the cytoplasm. The protein localises to the nucleus. In terms of biological role, plays a role in nonsense-mediated mRNA decay. Does not have RNase activity by itself. Promotes dephosphorylation of UPF1. Together with SMG7 is thought to provide a link to the mRNA degradation machinery involving exonucleolytic pathways, and to serve as an adapter for UPF1 to protein phosphatase 2A (PP2A), thereby triggering UPF1 dephosphorylation. Necessary for TERT activity. The chain is Nonsense-mediated mRNA decay factor SMG5 from Homo sapiens (Human).